A 31-amino-acid polypeptide reads, in one-letter code: Photosystem I reaction center subunit XII (31 aa).

Residues 6–25 (TQILAALVVALLPAFLAFRL) traverse the membrane as a helical segment.

Belongs to the PsaM family.

The protein resides in the cellular thylakoid membrane. The polypeptide is Photosystem I reaction center subunit XII (Synechocystis sp. (strain ATCC 27184 / PCC 6803 / Kazusa)).